The primary structure comprises 367 residues: Alanine racemase (367 aa).

Residue K35 is the Proton acceptor; specific for D-alanine of the active site. K35 carries the post-translational modification N6-(pyridoxal phosphate)lysine. Residue R130 coordinates substrate. Y258 (proton acceptor; specific for L-alanine) is an active-site residue. M306 contacts substrate.

The protein belongs to the alanine racemase family. Requires pyridoxal 5'-phosphate as cofactor.

The catalysed reaction is L-alanine = D-alanine. The protein operates within amino-acid biosynthesis; D-alanine biosynthesis; D-alanine from L-alanine: step 1/1. Its function is as follows. Catalyzes the interconversion of L-alanine and D-alanine. May also act on other amino acids. The polypeptide is Alanine racemase (alr) (Acinetobacter baumannii (strain SDF)).